We begin with the raw amino-acid sequence, 626 residues long: Dynein, cytoplasmic 1, intermediate chain 2a (626 aa).

Over residues 20–43 (QIREEKKRKEEERKKKEAELKKDA) the composition is skewed to basic and acidic residues. Disordered regions lie at residues 20–108 (QIRE…RTLH) and 142–197 (KEVV…HELT). Residues 82-99 (TAKSVGSPSEAGSQDSGD) are compositionally biased toward polar residues. The span at 160–169 (KDEEDEEEET) shows a compositional bias: acidic residues. The span at 177-197 (ETEKEKPEEKQVEEALPHELT) shows a compositional bias: basic and acidic residues. 7 WD repeats span residues 265-314 (SKQR…ATPE), 318-358 (HCQS…RTPV), 367-408 (AHTH…QPQD), 417-457 (SKSV…AGIS), 462-507 (GHHG…PLYS), 510-550 (DNSD…EVPT), and 556-595 (DGSP…AVPR).

It belongs to the dynein intermediate chain family. In terms of assembly, homodimer. The cytoplasmic dynein 1 complex consists of two catalytic heavy chains (HCs) and a number of non-catalytic subunits presented by intermediate chains (ICs), light intermediate chains (LICs) and light chains (LCs); the composition seems to vary in respect to the IC, LIC and LC composition. The heavy chain homodimer serves as a scaffold for the probable homodimeric assembly of the respective non-catalytic subunits. The ICs and LICs bind directly to the HC dimer and the LCs assemble on the IC dimer.

The protein localises to the cytoplasm. The protein resides in the cytoskeleton. Its function is as follows. Acts as one of several non-catalytic accessory components of the cytoplasmic dynein 1 complex that are thought to be involved in linking dynein to cargos and to adapter proteins that regulate dynein function. Cytoplasmic dynein 1 acts as a motor for the intracellular retrograde motility of vesicles and organelles along microtubules. Plays a role in the development of anterior brain and cartilaginous structures. This is Dynein, cytoplasmic 1, intermediate chain 2a (dync1i2a) from Danio rerio (Zebrafish).